We begin with the raw amino-acid sequence, 358 residues long: NADH-quinone oxidoreductase subunit H (358 aa).

8 helical membrane passes run 30 to 50 (VVIGVCIVALYAILAILLIYM), 96 to 116 (FLYNLAPFMVIIASFLTFSCL), 129 to 149 (VGVFFLLAASSIGVVGILLAG), 168 to 188 (IISYELSVGLSILTMVVLMGT), 201 to 221 (GWFIFKGHIPALIAFVIYLIA), 265 to 285 (FIVAAVAATIFLGGWMPLHIV), 297 to 317 (IPGFIWFFGKAFFVVFLLMWI), and 336 to 356 (YLVPISMVNLVIMVLIVVFGL).

The protein belongs to the complex I subunit 1 family. In terms of assembly, NDH-1 is composed of 14 different subunits. Subunits NuoA, H, J, K, L, M, N constitute the membrane sector of the complex.

It is found in the cell inner membrane. The catalysed reaction is a quinone + NADH + 5 H(+)(in) = a quinol + NAD(+) + 4 H(+)(out). In terms of biological role, NDH-1 shuttles electrons from NADH, via FMN and iron-sulfur (Fe-S) centers, to quinones in the respiratory chain. The immediate electron acceptor for the enzyme in this species is believed to be ubiquinone. Couples the redox reaction to proton translocation (for every two electrons transferred, four hydrogen ions are translocated across the cytoplasmic membrane), and thus conserves the redox energy in a proton gradient. This subunit may bind ubiquinone. The polypeptide is NADH-quinone oxidoreductase subunit H (Bacteroides fragilis (strain ATCC 25285 / DSM 2151 / CCUG 4856 / JCM 11019 / LMG 10263 / NCTC 9343 / Onslow / VPI 2553 / EN-2)).